Here is a 215-residue protein sequence, read N- to C-terminus: Ribose-5-phosphate isomerase A (215 aa).

Substrate is bound by residues Thr26–Thr29, Asp79–Asp82, and Lys92–Gly95. The Proton acceptor role is filled by Glu101. Lys119 lines the substrate pocket.

The protein belongs to the ribose 5-phosphate isomerase family. As to quaternary structure, homodimer.

It catalyses the reaction aldehydo-D-ribose 5-phosphate = D-ribulose 5-phosphate. The protein operates within carbohydrate degradation; pentose phosphate pathway; D-ribose 5-phosphate from D-ribulose 5-phosphate (non-oxidative stage): step 1/1. In terms of biological role, catalyzes the reversible conversion of ribose-5-phosphate to ribulose 5-phosphate. The chain is Ribose-5-phosphate isomerase A from Xanthomonas campestris pv. campestris (strain 8004).